A 230-amino-acid polypeptide reads, in one-letter code: Orotidine 5'-phosphate decarboxylase (230 aa).

Residues Asp11, Lys34, 61–70 (DLKLHDIPNT), Thr117, Arg179, Gln188, Gly208, and Arg209 contribute to the substrate site. Residue Lys63 is the Proton donor of the active site.

It belongs to the OMP decarboxylase family. Type 1 subfamily. Homodimer.

The catalysed reaction is orotidine 5'-phosphate + H(+) = UMP + CO2. Its pathway is pyrimidine metabolism; UMP biosynthesis via de novo pathway; UMP from orotate: step 2/2. In terms of biological role, catalyzes the decarboxylation of orotidine 5'-monophosphate (OMP) to uridine 5'-monophosphate (UMP). This is Orotidine 5'-phosphate decarboxylase from Streptococcus pyogenes serotype M1.